Consider the following 573-residue polypeptide: F-box/WD repeat-containing protein 5 (573 aa).

The 47-residue stretch at 3-49 (EGGLPLLPDSLVYQIFLSLGPADVLAAGLVCRQWQAVSRDEFLWKEQ) folds into the F-box domain. One copy of the WD 1 repeat lies at 90-129 (EHTDQVLHLSFSHSGYQFASCSKDCTVKIWNNDLTISLLH). Serine 151 carries the phosphoserine; by PLK4 modification. The short motif at 308–316 (RRVFDSVLD) is the D-box element. WD repeat units lie at residues 470 to 509 (TPND…CLAK) and 511 to 551 (RHED…RVLQ).

The protein belongs to the FBXW5 family. Part of the SCF (SKP1-CUL1-F-box) E3 ubiquitin-protein ligase complex SCF(FBXW5) composed of CUL1, SKP1, RBX1 and FBXW5. Component of the DCX(FBXW5) E3 ubiquitin ligase complex, at least composed of (CUL4A or CUL4B), DDB1, FBXW5 and RBX1. Interacts with CDC20, TSC1, TSC2 and SASS6. Interacts with EPS8. Interacts with TNFAIP8L1; TNFAIP8L1 competes with TSC2 to bind FBXW5 increasing TSC2 stability by preventing its ubiquitination. Phosphorylated at Ser-151 by PLK4 during the G1/S transition, leading to inhibit its ability to ubiquitinate SASS6. Post-translationally, ubiquitinated and degraded by the APC/C complex during mitosis and G1 phase. As to expression, widely expressed in adult and embryonal tissues.

Its subcellular location is the cytoplasm. Its pathway is protein modification; protein ubiquitination. Its function is as follows. Substrate recognition component of both SCF (SKP1-CUL1-F-box protein) and DCX (DDB1-CUL4-X-box) E3 ubiquitin-protein ligase complexes. Substrate-specific adapter of the DCX(FBXW5) E3 ubiquitin-protein ligase complex which mediates the polyubiquitination and subsequent degradation of TSC2. May also act as a negative regulator of MAP3K7/TAK1 signaling in the interleukin-1B (IL1B) signaling pathway. Substrate recognition component of the SCF(FBXW5) E3 ubiquitin-protein ligase complex which mediates the ubiquitination and subsequent proteasomal degradation of SASS6 during S phase, leading to prevent centriole reduplication. The SCF(FBXW5) complex also mediates ubiquitination and degradation of actin-regulator EPS8 during G2 phase, leading to the transient degradation of EPS8 and subsequent cell shape changes required to allow mitotic progression. This chain is F-box/WD repeat-containing protein 5 (Fbxw5), found in Mus musculus (Mouse).